The chain runs to 288 residues: Probable endonuclease 4 (288 aa).

The Zn(2+) site is built by His-75, His-115, Glu-153, Asp-187, His-190, His-224, Asp-237, His-239, and Glu-269.

This sequence belongs to the AP endonuclease 2 family. It depends on Zn(2+) as a cofactor.

The catalysed reaction is Endonucleolytic cleavage to 5'-phosphooligonucleotide end-products.. Functionally, endonuclease IV plays a role in DNA repair. It cleaves phosphodiester bonds at apurinic or apyrimidinic (AP) sites, generating a 3'-hydroxyl group and a 5'-terminal sugar phosphate. This chain is Probable endonuclease 4, found in Chlamydia muridarum (strain MoPn / Nigg).